Here is a 379-residue protein sequence, read N- to C-terminus: Cytochrome b (379 aa).

4 consecutive transmembrane segments (helical) span residues 33–53 (FGSL…FLAM), 77–98 (WLIR…FIHV), 113–133 (WNIG…GYVL), and 178–198 (FFAF…VHLL). 2 residues coordinate heme b: histidine 83 and histidine 97. Heme b-binding residues include histidine 182 and histidine 196. Histidine 201 serves as a coordination point for a ubiquinone. The next 4 membrane-spanning stretches (helical) occupy residues 226 to 246 (IKDL…ALFF), 288 to 308 (LGGV…PLLN), 320 to 340 (ITQT…WIGG), and 347 to 367 (FTTI…ILMP).

Belongs to the cytochrome b family. The cytochrome bc1 complex contains 11 subunits: 3 respiratory subunits (MT-CYB, CYC1 and UQCRFS1), 2 core proteins (UQCRC1 and UQCRC2) and 6 low-molecular weight proteins (UQCRH/QCR6, UQCRB/QCR7, UQCRQ/QCR8, UQCR10/QCR9, UQCR11/QCR10 and a cleavage product of UQCRFS1). This cytochrome bc1 complex then forms a dimer. Requires heme b as cofactor.

It localises to the mitochondrion inner membrane. Functionally, component of the ubiquinol-cytochrome c reductase complex (complex III or cytochrome b-c1 complex) that is part of the mitochondrial respiratory chain. The b-c1 complex mediates electron transfer from ubiquinol to cytochrome c. Contributes to the generation of a proton gradient across the mitochondrial membrane that is then used for ATP synthesis. The polypeptide is Cytochrome b (MT-CYB) (Akodon affinis (Colombian grass mouse)).